Consider the following 95-residue polypeptide: Co-chaperonin GroES (95 aa).

Belongs to the GroES chaperonin family. As to quaternary structure, heptamer of 7 subunits arranged in a ring. Interacts with the chaperonin GroEL.

The protein localises to the cytoplasm. In terms of biological role, together with the chaperonin GroEL, plays an essential role in assisting protein folding. The GroEL-GroES system forms a nano-cage that allows encapsulation of the non-native substrate proteins and provides a physical environment optimized to promote and accelerate protein folding. GroES binds to the apical surface of the GroEL ring, thereby capping the opening of the GroEL channel. In Bordetella bronchiseptica (strain ATCC BAA-588 / NCTC 13252 / RB50) (Alcaligenes bronchisepticus), this protein is Co-chaperonin GroES.